The primary structure comprises 212 residues: Ribosomal RNA small subunit methyltransferase G (212 aa).

S-adenosyl-L-methionine contacts are provided by residues Gly73, 127–128 (IE), and Arg143.

Belongs to the methyltransferase superfamily. RNA methyltransferase RsmG family.

Its subcellular location is the cytoplasm. It carries out the reaction guanosine(527) in 16S rRNA + S-adenosyl-L-methionine = N(7)-methylguanosine(527) in 16S rRNA + S-adenosyl-L-homocysteine. Its function is as follows. Specifically methylates the N7 position of guanine in position 527 of 16S rRNA. This chain is Ribosomal RNA small subunit methyltransferase G, found in Methylobacterium nodulans (strain LMG 21967 / CNCM I-2342 / ORS 2060).